Reading from the N-terminus, the 20-residue chain is Unknown protein from 2D-PAGE of needles (20 aa).

The sequence is that of Unknown protein from 2D-PAGE of needles from Pinus pinaster (Maritime pine).